A 209-amino-acid chain; its full sequence is Transmembrane protein 52 (209 aa).

Positions 1 to 32 are cleaved as a signal peptide; that stretch reads MARGPLAARGLRLLLPLLPLLPLLPLPQVALG. Residues 56–76 traverse the membrane as a helical segment; that stretch reads VGLILLAVLLLLLCGVTAGCV. The interval 145–209 is disordered; it reads AYSLYTPEPP…QLPPCSPGAP (65 aa). Residues 159–170 show a composition bias toward basic and acidic residues; sequence EAVKMAKPREEG. Polar residues predominate over residues 186-202; it reads LETTPVPQESGPNTQLP.

It localises to the membrane. The protein is Transmembrane protein 52 (TMEM52) of Homo sapiens (Human).